Reading from the N-terminus, the 475-residue chain is Actin-related protein 10 (475 aa).

This sequence belongs to the actin family.

It is found in the cytoplasm. The protein localises to the cytoskeleton. This Dictyostelium discoideum (Social amoeba) protein is Actin-related protein 10.